A 305-amino-acid polypeptide reads, in one-letter code: Uridylate-specific endoribonuclease D (305 aa).

Residues 1–17 (MKVYFVFLCLLPSLISG) form the signal peptide. An EndoU domain is found at 33–305 (SNAEIQSLAE…RYVASSYPNI (273 aa)). Residues H182, H197, and K240 contribute to the active site. N288 carries an N-linked (GlcNAc...) asparagine glycan.

The protein belongs to the ENDOU family. In terms of assembly, monomer. It depends on Mn(2+) as a cofactor.

It is found in the secreted. It carries out the reaction ribonucleotidyl-uridine-RNA = a 5'-end dephospho-uridine-RNA + a 3'-end 2',3'-cyclophospho-ribonucleotide-RNA. Functionally, endoribonuclease that cleaves single-stranded RNAs at 5' of uridylates and releases a product with a 2',3'-cyclic phosphate at the 3'-end. In Xenopus laevis (African clawed frog), this protein is Uridylate-specific endoribonuclease D (endou-d).